The following is a 388-amino-acid chain: Succinate--CoA ligase [ADP-forming] subunit beta (388 aa).

The 236-residue stretch at 9-244 (KEILRKFGVA…LDEEDPAEIE (236 aa)) folds into the ATP-grasp domain. ATP contacts are provided by residues Lys46, 53–55 (GRG), Glu99, Ala102, and Glu107. Residues Asn199 and Asp213 each coordinate Mg(2+). Residues Asn264 and 321 to 323 (GIM) contribute to the substrate site.

It belongs to the succinate/malate CoA ligase beta subunit family. In terms of assembly, heterotetramer of two alpha and two beta subunits. Requires Mg(2+) as cofactor.

It catalyses the reaction succinate + ATP + CoA = succinyl-CoA + ADP + phosphate. The enzyme catalyses GTP + succinate + CoA = succinyl-CoA + GDP + phosphate. Its pathway is carbohydrate metabolism; tricarboxylic acid cycle; succinate from succinyl-CoA (ligase route): step 1/1. Succinyl-CoA synthetase functions in the citric acid cycle (TCA), coupling the hydrolysis of succinyl-CoA to the synthesis of either ATP or GTP and thus represents the only step of substrate-level phosphorylation in the TCA. The beta subunit provides nucleotide specificity of the enzyme and binds the substrate succinate, while the binding sites for coenzyme A and phosphate are found in the alpha subunit. This Burkholderia cenocepacia (strain HI2424) protein is Succinate--CoA ligase [ADP-forming] subunit beta.